The primary structure comprises 273 residues: 4-hydroxy-tetrahydrodipicolinate reductase (273 aa).

Residues 12-17 (GAGGRM) and Glu-38 each bind NAD(+). Arg-39 provides a ligand contact to NADP(+). NAD(+)-binding positions include 102–104 (GTT) and 126–129 (AANF). Catalysis depends on His-159, which acts as the Proton donor/acceptor. Residue His-160 participates in (S)-2,3,4,5-tetrahydrodipicolinate binding. Lys-163 functions as the Proton donor in the catalytic mechanism. A (S)-2,3,4,5-tetrahydrodipicolinate-binding site is contributed by 169-170 (GT).

This sequence belongs to the DapB family. Homotetramer.

It localises to the cytoplasm. It carries out the reaction (S)-2,3,4,5-tetrahydrodipicolinate + NAD(+) + H2O = (2S,4S)-4-hydroxy-2,3,4,5-tetrahydrodipicolinate + NADH + H(+). The catalysed reaction is (S)-2,3,4,5-tetrahydrodipicolinate + NADP(+) + H2O = (2S,4S)-4-hydroxy-2,3,4,5-tetrahydrodipicolinate + NADPH + H(+). It functions in the pathway amino-acid biosynthesis; L-lysine biosynthesis via DAP pathway; (S)-tetrahydrodipicolinate from L-aspartate: step 4/4. Functionally, catalyzes the conversion of 4-hydroxy-tetrahydrodipicolinate (HTPA) to tetrahydrodipicolinate. This Shigella boydii serotype 4 (strain Sb227) protein is 4-hydroxy-tetrahydrodipicolinate reductase.